We begin with the raw amino-acid sequence, 556 residues long: MDFRSLIASSVAQDKDREFEVRPSSRGSWSCKEVDEFDALSIEYEPKPIEKYPAKLHARQVKKYLGLQEGLIYLPGLPSFNYEDSDMQPAFRQRRYFYYLTGVNFPDCIVTYSIHRDQLWLWIPPPNSGRSVIYNGSRPTAKEIMAKYDLDHVETLPHLDSYLTWYAHTEPGKIHVLHDYQTPNNVELQITRKNGSQSIMSESPFDSTKLEEAMNTARAIKSPYELKMIRKASAITAQGHINVLRGLRYLSNEAEIEAIFTATCIARQAKTQAYGVIAGSGENASTLHYMANNEPLKGRQLLCLDAGCEWDCYASDVTRTVPISGEYTEEAQAIYDLVAKMQDECIEMLKPGANYRDVHMHAHKVALRGLMELGLVEGGTFNELYMAGVSVAFFPHGLGHYVGLEVHDVGPGGMIITNRLFDFNRKPADWTDAYFQILSDSGINSGGGAILSKDMVVTVEPGIYFSRYALEEVYLKSPKYAKYINKELLQKYYPVGGVRIEDDLLITEDGYENLTTAPKGEAALKIINEGREQEEKRVVCEKAAESKRKQKKTWFW.

Mn(2+) contacts are provided by aspartate 305, aspartate 316, glutamate 460, and glutamate 501.

This sequence belongs to the peptidase M24B family. Mn(2+) is required as a cofactor.

The enzyme catalyses Release of any N-terminal amino acid, including proline, that is linked to proline, even from a dipeptide or tripeptide.. Functionally, catalyzes the removal of a penultimate prolyl residue from the N-termini of peptides. The sequence is that of Probable Xaa-Pro aminopeptidase SS1G_06948 from Sclerotinia sclerotiorum (strain ATCC 18683 / 1980 / Ss-1) (White mold).